The sequence spans 540 residues: MLSQIQRFGGAMFTPVLLFPFAGIVVGIAIMLRNPMFVGEALTAPDSLFAQIVHIIEEGGWTVFRNMPLIFAVGLPIGLAKQAQGRACLAVLVSFLTWNYFINAMGMTWGHFFGVDFSAEPTAGSGLTMIAGIKTLDTSIIGAIVISGLVTALHNRYFDKPLPVFLGIFQGSSFVVIVAFLAMIPCAWLTLLGWPKVQLGIESLQAFLRSAGALGVWVYIFLERILIPTGLHHFVYGPFIFGPAVVEGGLQVYWAEHLQAFSQSTEPLKTLFPEGGFALHGNSKVFGSVGIALALYFTAAPENRVKVAGLLIPATLTAMLVGITEPLEFTFLFISPLLFAVHAVLAATMATVMYICGVVGNFGGGLLDQFLPQNWIPMFHHHASMMFIQIGIGLCFTALYFVVFRTLILRLNLKTPGREESEIKLYSKADYQAARGKTTAAAAPETRLGQAAGFLQALGGADNIESINNCATRLRIALVDMAKTQSDDVFKALGAHGVVRRGNGIQVIVGLHVPQVRDQLENLMKDSLSTEHTTMTEAVS.

Residues 1–420 (MLSQIQRFGG…LNLKTPGREE (420 aa)) form the PTS EIIC type-1 domain. Transmembrane regions (helical) follow at residues 12–32 (MFTP…AIML), 87–107 (ACLA…AMGM), 130–150 (IAGI…SGLV), 174–194 (FVVI…LLGW), 201–221 (IESL…VYIF), 225–245 (ILIP…GPAV), 277–297 (FALH…ALYF), 307–327 (VAGL…TEPL), 329–349 (FTFL…AATM), 352–372 (VMYI…QFLP), and 384–404 (SMMF…FVVF). The PTS EIIB type-1 domain occupies 448–530 (LGQAAGFLQA…ENLMKDSLST (83 aa)). Cys470 functions as the Phosphocysteine intermediate; for EIIB activity in the catalytic mechanism.

The protein localises to the cell membrane. Its function is as follows. The phosphoenolpyruvate-dependent sugar phosphotransferase system (sugar PTS), a major carbohydrate active -transport system, catalyzes the phosphorylation of incoming sugar substrates concomitantly with their translocation across the cell membrane. This system is involved in alpha-glucoside transport. In terms of biological role, involved in the transport and simultaneous phosphorylation at O-6 of the glucosyl moiety of sucrose and its five linkage-isomeric alpha-D-glucosyl-D-fructoses. Can also transport maltose, isomaltose and maltitol, phosphorylating at O-6 of their non-reducing glucose portion. This is PTS system alpha-glucoside-specific EIICB component (aglA) from Klebsiella pneumoniae.